The chain runs to 737 residues: Catalase-peroxidase (737 aa).

The signal sequence occupies residues 1 to 23 (MLKKILPVLITLAIVHNTPTAWA). The tryptophyl-tyrosyl-methioninium (Trp-Tyr) (with M-249) cross-link spans 102–223 (WHGAGTYRIY…LAATQMGLIY (122 aa)). Histidine 103 serves as the catalytic Proton acceptor. The segment at residues 223–249 (YVNPEGPNGKPDPVAAAKDIREAFARM) is a cross-link (tryptophyl-tyrosyl-methioninium (Tyr-Met) (with W-102)). A heme b-binding site is contributed by histidine 264.

This sequence belongs to the peroxidase family. Peroxidase/catalase subfamily. Homodimer or homotetramer. Heme b serves as cofactor. Post-translationally, formation of the three residue Trp-Tyr-Met cross-link is important for the catalase, but not the peroxidase activity of the enzyme.

It catalyses the reaction H2O2 + AH2 = A + 2 H2O. The enzyme catalyses 2 H2O2 = O2 + 2 H2O. Functionally, bifunctional enzyme with both catalase and broad-spectrum peroxidase activity. This Yersinia pseudotuberculosis serotype O:3 (strain YPIII) protein is Catalase-peroxidase.